The following is a 221-amino-acid chain: Ependymin-2 (221 aa).

Residues 1-21 (MQDFAFAALSIWLCLGATALA) form the signal peptide. 3 N-linked (GlcNAc...) asparagine glycosylation sites follow: Asn33, Asn73, and Asn97.

The protein belongs to the ependymin family. Post-translationally, binds calcium through the terminal sialic acids. EPDs are synthesized in the meninx and secreted in the cerebrospinal fluid.

It is found in the secreted. Its function is as follows. May play a role in neural plasticity. May be involved during axon regeneration. This is Ependymin-2 (epd2) from Salmo salar (Atlantic salmon).